The primary structure comprises 248 residues: Small ribosomal subunit protein uS3 (248 aa).

The KH type-2 domain occupies Ile-38–Lys-106. Positions Ser-214–Arg-229 are enriched in basic and acidic residues. A disordered region spans residues Ser-214–Gly-248. Positions Glu-230–Ala-242 are enriched in basic residues.

The protein belongs to the universal ribosomal protein uS3 family. In terms of assembly, part of the 30S ribosomal subunit. Forms a tight complex with proteins S10 and S14.

Its function is as follows. Binds the lower part of the 30S subunit head. Binds mRNA in the 70S ribosome, positioning it for translation. This is Small ribosomal subunit protein uS3 from Corynebacterium urealyticum (strain ATCC 43042 / DSM 7109).